Reading from the N-terminus, the 417-residue chain is Glutamyl-tRNA reductase (417 aa).

Residues 48–51 (TCNR), Ser100, 105–107 (EDQ), and Gln111 each bind substrate. Cys49 functions as the Nucleophile in the catalytic mechanism. 180–185 (GAGETG) lines the NADP(+) pocket.

Belongs to the glutamyl-tRNA reductase family. As to quaternary structure, homodimer.

It carries out the reaction (S)-4-amino-5-oxopentanoate + tRNA(Glu) + NADP(+) = L-glutamyl-tRNA(Glu) + NADPH + H(+). Its pathway is porphyrin-containing compound metabolism; protoporphyrin-IX biosynthesis; 5-aminolevulinate from L-glutamyl-tRNA(Glu): step 1/2. Catalyzes the NADPH-dependent reduction of glutamyl-tRNA(Glu) to glutamate 1-semialdehyde (GSA). This chain is Glutamyl-tRNA reductase, found in Methanothrix thermoacetophila (strain DSM 6194 / JCM 14653 / NBRC 101360 / PT) (Methanosaeta thermophila).